A 392-amino-acid polypeptide reads, in one-letter code: Sterol methyltransferase-like 3 (392 aa).

Residues 20–42 (VTPWQAAAGVTAAIFIGSYLWHS) traverse the membrane as a helical segment.

This sequence belongs to the class I-like SAM-binding methyltransferase superfamily. Erg6/SMT family.

The protein resides in the microsome membrane. In terms of biological role, unable to convert squalene, botryococcene, cycloartenol, zymosterol or lanosterol to mono-, di-, tri- or tetramethylated derivatives. The chain is Sterol methyltransferase-like 3 (SMT-3) from Botryococcus braunii (Green alga).